The following is a 397-amino-acid chain: uncharacterized protein (397 aa).

2 disordered regions span residues 159-203 (LNSS…KSTI) and 221-397 (NSVK…KTKN). Residues 221–240 (NSVKSSPSKSFVSISSPVQS) are compositionally biased toward low complexity. Composition is skewed to polar residues over residues 285–309 (TSTL…SSST) and 320–330 (VNPNSTSSVTF). A DNA-binding region (zn(2)-C6 fungal-type) is located at residues 342 to 371 (CSRCKKSKKGCDRQRPCGRCRDAGLNSEDC). The segment covering 350–363 (KGCDRQRPCGRCRD) has biased composition (basic and acidic residues). A compositionally biased stretch (basic residues) spans 383–397 (RKPRGRGRGRPKTKN).

It localises to the nucleus. This is an uncharacterized protein from Schizosaccharomyces pombe (strain 972 / ATCC 24843) (Fission yeast).